The chain runs to 943 residues: Zinc finger BED domain-containing protein 39 (943 aa).

Residues 1 to 99 (MSSVSSDIDG…DIAMDVSGST (99 aa)) are disordered. Positions 12–21 (PETKRFRIDV) are enriched in basic and acidic residues. Over residues 50–72 (SPAAPSSASYRSSNSSVISSSES) the composition is skewed to low complexity. The segment covering 73 to 85 (PIKDEDVDVHDGQ) has biased composition (basic and acidic residues). A BED-type; degenerate zinc finger spans residues 184-235 (NKQTPVWKYFVYNKTENLSRCIVGDCTYMLKGPHTSTLACHLKKHTREYSEF). 2 disordered regions span residues 242–315 (YSRT…KEPS) and 328–348 (RQAT…PQLP). Over residues 262 to 276 (TLQTQNTPRQTGSPA) the composition is skewed to polar residues. The segment covering 277-292 (STCNTNSNTSSSVSSG) has biased composition (low complexity). A compositionally biased stretch (polar residues) spans 328–338 (RQATNNSNGSP).

As to expression, expressed in distal tip cells and in germline cells.

It is found in the nucleus. The protein resides in the cytoplasm. Functionally, regulates the timing and orientation of distal tip cell migration during gonadal development. May act in parallel to cacn-1 and Rac GTPases to control the anterior and posterior migration of distal tip cells. This chain is Zinc finger BED domain-containing protein 39, found in Caenorhabditis elegans.